Reading from the N-terminus, the 324-residue chain is Acetyl-coenzyme A carboxylase carboxyl transferase subunit alpha (324 aa).

In terms of domain architecture, CoA carboxyltransferase C-terminal spans 44–298 (QLERRAEELR…KQTLIDTIDE (255 aa)).

Belongs to the AccA family. As to quaternary structure, acetyl-CoA carboxylase is a heterohexamer composed of biotin carboxyl carrier protein (AccB), biotin carboxylase (AccC) and two subunits each of ACCase subunit alpha (AccA) and ACCase subunit beta (AccD).

Its subcellular location is the cytoplasm. The enzyme catalyses N(6)-carboxybiotinyl-L-lysyl-[protein] + acetyl-CoA = N(6)-biotinyl-L-lysyl-[protein] + malonyl-CoA. It functions in the pathway lipid metabolism; malonyl-CoA biosynthesis; malonyl-CoA from acetyl-CoA: step 1/1. In terms of biological role, component of the acetyl coenzyme A carboxylase (ACC) complex. First, biotin carboxylase catalyzes the carboxylation of biotin on its carrier protein (BCCP) and then the CO(2) group is transferred by the carboxyltransferase to acetyl-CoA to form malonyl-CoA. This is Acetyl-coenzyme A carboxylase carboxyl transferase subunit alpha from Rippkaea orientalis (strain PCC 8801 / RF-1) (Cyanothece sp. (strain PCC 8801)).